The chain runs to 161 residues: Non-specific lipid transfer protein GPI-anchored 24 (161 aa).

Residues 1–23 form the signal peptide; the sequence is MAQTTTLILLLATLLVAATTVSG. 4 disulfides stabilise this stretch: Cys42/Cys79, Cys49/Cys63, Cys64/Cys104, and Cys77/Cys113. N-linked (GlcNAc...) asparagine glycosylation is present at Asn92. A lipid anchor (GPI-anchor amidated aspartate) is attached at Asp138. A propeptide spans 139–161 (removed in mature form); the sequence is AASKLAGTGLVGIVVITIAAMFY.

This sequence belongs to the plant LTP family.

Its subcellular location is the cell membrane. Functionally, probable lipid transfer protein. The polypeptide is Non-specific lipid transfer protein GPI-anchored 24 (Arabidopsis thaliana (Mouse-ear cress)).